Consider the following 205-residue polypeptide: Thymidylate kinase (205 aa).

Position 9–16 (9–16 (GPEGSGKT)) interacts with ATP.

This sequence belongs to the thymidylate kinase family.

The enzyme catalyses dTMP + ATP = dTDP + ADP. In terms of biological role, phosphorylation of dTMP to form dTDP in both de novo and salvage pathways of dTTP synthesis. The polypeptide is Thymidylate kinase (Staphylococcus aureus (strain NCTC 8325 / PS 47)).